Here is a 172-residue protein sequence, read N- to C-terminus: Stellate protein CG33236/CG33240/CG33244/CG33245 (172 aa).

This sequence belongs to the casein kinase 2 subunit beta family. Interacts in vitro with the casein kinase 2 alpha subunit (CkII-alpha). The relevance of such interaction is however unclear in vivo. In terms of tissue distribution, probably not expressed in wild-type flies. In males lacking the Y chromosome, it is testis-specific and constitutes the main component of star-shaped crystals.

Unknown. In males lacking the Y chromosome, its strong overexpression leads to the appearance of proteinaceous star-shaped crystals in the primary spermatocytes causing meiotic drive, possibly by interfering with normal casein kinase 2 activity. The polypeptide is Stellate protein CG33236/CG33240/CG33244/CG33245 (Ste:CG33236) (Drosophila melanogaster (Fruit fly)).